Here is a 1978-residue protein sequence, read N- to C-terminus: Centrosomal protein Cep290 (1978 aa).

Positions 1 to 650 (MSMDIPETVS…SLCEVPEIAE (650 aa)) are necessary and sufficient for function in ciliogenesis, transition zone (TZ) assembly, and recruitment of DZP1 and Mks1 to the TZ. Also required for subcellular localization to the cilium basal body. Coiled-coil stretches lie at residues 76–384 (DRRL…KSQQ) and 471–505 (IERL…LQQD). The segment at 271 to 296 (QLEGKSISSGQTNSSNSQSQQEEEHA) is disordered. Over residues 276–290 (SISSGQTNSSNSQSQ) the composition is skewed to low complexity. The segment at 663-688 (ATRPSSPTEATMGLRRPTVPDPEEKP) is disordered. Coiled coils occupy residues 853-887 (FEEQ…ANEQ), 922-970 (LAKV…TQQD), and 1192-1233 (ADAV…SRSE). Residues 1313–1324 (KEKLRQKPEVPV) are compositionally biased toward basic and acidic residues. A disordered region spans residues 1313–1397 (KEKLRQKPEV…EKQDTEELKE (85 aa)). A compositionally biased stretch (low complexity) spans 1329–1341 (STDSRSSSSSDSS). A compositionally biased stretch (acidic residues) spans 1379–1391 (VTEEPEGEEEKQD). Coiled coils occupy residues 1405–1439 (IKDL…CQER) and 1501–1654 (LNRT…LESK). Disordered stretches follow at residues 1684–1714 (VGVS…AHHH) and 1859–1884 (LKDG…RLQQ). Polar residues predominate over residues 1693-1708 (PSESPETYTGPSSECS). Residues 1726–1935 (IEALKSRIEL…KEQLVKKTQL (210 aa)) adopt a coiled-coil conformation.

As to quaternary structure, interacts (via N-terminus) with DZIP1. As to expression, expressed in sensory neurons type I and in germ cells (at protein level).

It is found in the cytoplasm. The protein localises to the cytoskeleton. It localises to the cilium basal body. The protein resides in the microtubule organizing center. Its subcellular location is the centrosome. It is found in the centriole. Its function is as follows. Essential for ciliogenesis in sensory neurons and spermatocytes. During neuron and spermatocyte ciliogenesis, essential for initiating transition zone (TZ) assembly and is required for the formation of diverse connections between microtubules and between microtubules and the membrane. Regulates TZ assembly by recruiting DZIP1 to the plasma membrane where it promotes early ciliary membrane formation resulting in the initiation of TZ assembly. In Drosophila melanogaster (Fruit fly), this protein is Centrosomal protein Cep290.